A 361-amino-acid polypeptide reads, in one-letter code: Peptide chain release factor 1 (361 aa).

Position 233 is an N5-methylglutamine (Gln233). Over residues 280-293 the composition is skewed to basic and acidic residues; it reads ERRKKEQERADSRR. The disordered stretch occupies residues 280–307; it reads ERRKKEQERADSRRGQVGSGDRSERIRT.

It belongs to the prokaryotic/mitochondrial release factor family. Post-translationally, methylated by PrmC. Methylation increases the termination efficiency of RF1.

It is found in the cytoplasm. In terms of biological role, peptide chain release factor 1 directs the termination of translation in response to the peptide chain termination codons UAG and UAA. In Rickettsia massiliae (strain Mtu5), this protein is Peptide chain release factor 1.